Here is a 969-residue protein sequence, read N- to C-terminus: GATOR2 complex protein Wdr59 (969 aa).

The disordered stretch occupies residues 1–24 (MPPTETLRPGERGTAGGPGAGAPE). WD repeat units lie at residues 127–167 (GHTR…KPAL), 172–211 (VCMS…CPTH), 215–255 (AHLN…RAEK), 258–303 (TTMS…DPIC), and 307–351 (GHTD…LKLC). Position 373 is a phosphothreonine (T373). Residues 435–538 (HEFSLLNTNM…RALVAAMKKK (104 aa)) form the RWD domain. A C4-type zinc finger spans residues 891–911 (ECRKCAKPKRTPKCEPCKRPV). Positions 892, 895, 904, 907, 917, 928, 933, 936, 939, 950, 953, 955, and 957 each coordinate Zn(2+). Residues 912 to 960 (LFCVLCRLPVKGAANACLACGHGGHIDHMMQWFEKHNVCATCGCKCLER) form an RING-type; atypical zinc finger.

It belongs to the WD repeat WDR59 family. In terms of assembly, component of the GATOR complex consisting of mio, Nup44A/Seh1, Im11, Nplr3, Nplr2, Wdr24, Wdr59 and Sec13. Within the GATOR complex, probable component of the GATOR2 subcomplex which is likely composed of mio, Nup44A/Seh1, Wdr24, Wdr59 and Sec13. The GATOR2 complex associates with unmet in the absence of S-adenosyl-L-methionine; the mio-Wdr24-Nup44A subcomplex is essential and sufficient for this interaction while Wdr59 and Sec13 are dispensable. This association acts as a nutrient sensor to inhibit mTORC1 signaling in the absence of methionine.

The protein resides in the lysosome membrane. Functionally, a component of the GATOR complex, which functions as a regulator of the amino acid-sensing branch of the mTORC1 signaling pathway. The two GATOR subcomplexes, GATOR1 and GATOR2, regulate the mTORC1 pathway in order to mediate metabolic homeostasis, female gametogenesis and the response to amino acid limitation and complete starvation. GATOR2 activates the mTORC1 signaling pathway through the inhibition of the GATOR1 subcomplex, controlling the switch to cell proliferation and growth under nutrient replete conditions and during female oocyte development. Acts as an atypical component of the GATOR2 subcomplex, which can either promote or inhibit mTORC1 signaling, depending on tissues: inhibits mTORC1 activity by preventing the activity of GATOR2 in the ovary and the eye imaginal disk brain, while it promotes mTORC1 activity in the fat body. This is GATOR2 complex protein Wdr59 from Drosophila melanogaster (Fruit fly).